Reading from the N-terminus, the 464-residue chain is Secretion-regulating guanine nucleotide exchange factor (464 aa).

RCC1 repeat units follow at residues 15–67 (AVLF…VTDG), 68–119 (GDLF…LTEK), 120–171 (GQVL…TTAT), 172–230 (GSVF…LTDT), 231–283 (GELY…KTET), 284–351 (GKVF…VIRD), and 352–402 (KCCS…LAVC). The segment at 422 to 464 (DDTENTESQGAVDRDRLEGETISDLNPDRTRNGGGGCESETVQ) is disordered. Phosphoserine is present on S429.

As to quaternary structure, interacts with SEC5. The interaction occurs only in the presence of magnesium or manganese and is stimulated by dCTP or GTP.

It localises to the cytoplasm. Its subcellular location is the nucleus. In terms of biological role, probable guanine nucleotide exchange factor (GEF), which may be involved in the secretion process. The chain is Secretion-regulating guanine nucleotide exchange factor (Sergef) from Mus musculus (Mouse).